A 359-amino-acid polypeptide reads, in one-letter code: 4-galactosyl-N-acetylglucosaminide 3-alpha-L-fucosyltransferase 9 (359 aa).

Residues 1–11 (MTSTSKGILRP) are Cytoplasmic-facing. The helical; Signal-anchor for type II membrane protein transmembrane segment at 12-32 (FLIVCIILGCFMACLLIYIKP) threads the bilayer. At 33–359 (TNSWIFSPME…VGNLEKWFWN (327 aa)) the chain is on the lumenal side. N-linked (GlcNAc...) asparagine glycosylation is present at Asn62. Residues 63–168 (ETTILVWVWP…RRDSDIQVPY (106 aa)) are acceptor-binding. Gln75 provides a ligand contact to a beta-D-galactosyl-(1-&gt;4)-N-acetyl-beta-D-glucosaminyl derivative. 3 disulfide bridges follow: Cys82–Cys335, Cys91–Cys338, and Cys190–Cys238. A glycan (N-linked (GlcNAc...) asparagine) is linked at Asn101. A beta-D-galactosyl-(1-&gt;4)-N-acetyl-beta-D-glucosaminyl derivative is bound at residue Glu137. Catalysis depends on Glu137, which acts as the Nucleophile. Glu137 contributes to the GDP-beta-L-fucose binding site. Residue Asn153 is glycosylated (N-linked (GlcNAc...) asparagine). GDP-beta-L-fucose-binding residues include Tyr168, Val192, Ser194, Asn195, Arg202, Val226, Tyr241, Asn246, Tyr252, Glu255, and Lys256. Positions 169–326 (GFLTVSTNPF…NWRKDFTVNL (158 aa)) are donor-binding. The acceptor-binding stretch occupies residues 327–359 (PRFWESHACLACDHVKRHQEYKSVGNLEKWFWN).

It belongs to the glycosyltransferase 10 family. As to quaternary structure, homodimer. In terms of processing, N-glycosylated with complex-type N-glycans. The glycan alpha-D-Man-(1-&gt;3)-beta-D-Man-(1-&gt;4)-GlcNAc-(1-&gt;4)-GlcNAc is attached at Asn-153. Strongly expressed in forebrain and stomach, lower expression in spleen and peripheral blood leukocytes, and no expression in small intestine, colon, liver, lung, kidney, adrenal cortex or uterus. Highly expressed in granulocytes. Not expressed in monocytes.

The protein localises to the golgi apparatus. The protein resides in the trans-Golgi network membrane. It localises to the golgi apparatus membrane. The catalysed reaction is a beta-D-galactosyl-(1-&gt;4)-N-acetyl-beta-D-glucosaminyl derivative + GDP-beta-L-fucose = a beta-D-galactosyl-(1-&gt;4)-[alpha-L-fucosyl-(1-&gt;3)]-N-acetyl-beta-D-glucosaminyl derivative + GDP + H(+). The enzyme catalyses an alpha-Neu5Ac-(2-&gt;3)-beta-D-Gal-(1-&gt;4)-beta-D-GlcNAc-(1-&gt;3)-beta-D-Gal-(1-&gt;4)-beta-D-GlcNAc derivative + GDP-beta-L-fucose = an alpha-Neu5Ac-(2-&gt;3)-beta-D-Gal-(1-&gt;4)-beta-D-GlcNAc-(1-&gt;3)-beta-D-Gal-(1-&gt;4)-[alpha-L-Fuc-(1-&gt;3)]-beta-D-GlcNAc derivative + GDP + H(+). It catalyses the reaction alpha-N-glycoloylneuraminosyl-(2-&gt;3)-beta-D-galactosyl-(1-&gt;4)-N-acetyl-beta-D-glucosaminyl-(1-&gt;3)-beta-D-galactosyl-(1-&gt;4)-N-acetyl-beta-D-glucosaminyl-(1-&gt;3)-beta-D-galactosyl-(1-&gt;4)-beta-D-glucosyl-(1&lt;-&gt;1')-ceramide + GDP-beta-L-fucose = alpha-N-glycoloylneuraminosyl-(2-&gt;3)-beta-D-galactosyl-(1-&gt;4)-N-acetyl-beta-D-glucosaminyl-(1-&gt;3)-beta-D-galactosyl-(1-&gt;4)-[alpha-L-fucosyl-(1-&gt;3)]-N-acetyl-beta-D-glucosaminyl-(1-&gt;3)-beta-D-galactosyl-(1-&gt;4)-beta-D-glucosyl-(1&lt;-&gt;1')-ceramide + GDP + H(+). It carries out the reaction alpha-D-galactosyl-(1-&gt;3)-beta-D-galactosyl-(1-&gt;4)-N-acetyl-beta-D-glucosaminyl-(1-&gt;3)-beta-D-galactosyl-(1-&gt;4)-beta-D-glucosyl-(1&lt;-&gt;1')-ceramide + GDP-beta-L-fucose = a neolactoside IV(3)-alpha-Gal,III(3)-alpha-Fuc-nLc4Cer + GDP + H(+). The catalysed reaction is a neolactoside nLc4Cer + GDP-beta-L-fucose = a neolactoside III(3)-alpha-Fuc-nLc4Cer + GDP + H(+). The enzyme catalyses an N-acetyl-alpha-neuraminyl-(2-&gt;3)-beta-D-galactosyl-(1-&gt;4)-N-acetyl-beta-D-glucosaminyl derivative + GDP-beta-L-fucose = an alpha-Neu5Ac-(2-&gt;3)-beta-D-Gal-(1-&gt;4)-[alpha-L-Fuc-(1-&gt;3)]-beta-D-GlcNAc derivative + GDP + H(+). It catalyses the reaction beta-D-Gal-(1-&gt;4)-beta-D-GlcNAc-(1-&gt;3)-beta-D-Gal-(1-&gt;4)-D-Glc + GDP-beta-L-fucose = beta-D-Gal-(1-&gt;4)-[alpha-L-Fuc-(1-&gt;3)]-beta-D-GlcNAc-(1-&gt;3)-beta-D-Gal-(1-&gt;4)-D-Glc + GDP + H(+). It carries out the reaction an alpha-L-Fuc-(1-&gt;2)-beta-D-Gal-(1-&gt;4)-beta-D-GlcNAc derivative + GDP-beta-L-fucose = an alpha-L-Fuc-(1-&gt;2)-beta-D-Gal-(1-&gt;4)-[alpha-L-Fuc-(1-&gt;3)]-beta-D-GlcNAc derivative + GDP + H(+). It participates in protein modification; protein glycosylation. Its pathway is glycolipid biosynthesis. With respect to regulation, activated by Mn2+. Its function is as follows. Catalyzes alpha(1-&gt;3) linkage of fucosyl moiety transferred from GDP-beta-L-fucose to N-acetyl glucosamine (GlcNAc) within type 2 lactosamine (LacNAc, beta-D-Gal-(1-&gt;4)-beta-D-GlcNAc-) glycan attached to glycolipids and N- or O-linked glycoproteins. Fucosylates distal type 2 LacNAc and its fucosylated (H-type 2 LacNAc) and sialylated (sialyl-type 2 LacNAc) derivatives to form Lewis x (Lex) (CD15) and Lewis y (Ley) antigenic epitopes involved in cell adhesion and differentiation. Generates Lex epitopes in the brain, presumably playing a role in the maintenance of neuronal stemness and neurite outgrowth in progenitor neural cells. Fucosylates the internal type 2 LacNAc unit of the polylactosamine chain to form VIM-2 antigen that serves as recognition epitope for SELE. Can also modify milk oligosaccharides, in particular type 2 tetrasaccharide LNnT. In Homo sapiens (Human), this protein is 4-galactosyl-N-acetylglucosaminide 3-alpha-L-fucosyltransferase 9.